The sequence spans 255 residues: Triosephosphate isomerase (255 aa).

Substrate is bound at residue Asn9–Lys11. His95 (electrophile) is an active-site residue. Residue Glu167 is the Proton acceptor of the active site. Substrate-binding positions include Gly173, Ser212, and Gly233–Gly234.

This sequence belongs to the triosephosphate isomerase family. Homodimer.

It localises to the cytoplasm. The catalysed reaction is D-glyceraldehyde 3-phosphate = dihydroxyacetone phosphate. Its pathway is carbohydrate biosynthesis; gluconeogenesis. It participates in carbohydrate degradation; glycolysis; D-glyceraldehyde 3-phosphate from glycerone phosphate: step 1/1. Functionally, involved in the gluconeogenesis. Catalyzes stereospecifically the conversion of dihydroxyacetone phosphate (DHAP) to D-glyceraldehyde-3-phosphate (G3P). The protein is Triosephosphate isomerase of Klebsiella pneumoniae.